Here is a 231-residue protein sequence, read N- to C-terminus: Protein FMP52, mitochondrial (231 aa).

Residues 1–44 constitute a mitochondrion transit peptide; that stretch reads MNGLVLGATGLCGGGFLRHAQEAPQFSKVYAILRRELPFPATDK.

It belongs to the FMP52 family.

The protein localises to the mitochondrion outer membrane. The polypeptide is Protein FMP52, mitochondrial (FMP52) (Saccharomyces cerevisiae (strain ATCC 204508 / S288c) (Baker's yeast)).